Consider the following 170-residue polypeptide: NADH-quinone oxidoreductase subunit B (170 aa).

[4Fe-4S] cluster-binding residues include Cys42, Cys43, Cys107, and Cys136.

Belongs to the complex I 20 kDa subunit family. NDH-1 is composed of 14 different subunits. Subunits NuoB, C, D, E, F, and G constitute the peripheral sector of the complex. [4Fe-4S] cluster is required as a cofactor.

The protein localises to the cell inner membrane. It catalyses the reaction a quinone + NADH + 5 H(+)(in) = a quinol + NAD(+) + 4 H(+)(out). Functionally, NDH-1 shuttles electrons from NADH, via FMN and iron-sulfur (Fe-S) centers, to quinones in the respiratory chain. The immediate electron acceptor for the enzyme in this species is believed to be ubiquinone. Couples the redox reaction to proton translocation (for every two electrons transferred, four hydrogen ions are translocated across the cytoplasmic membrane), and thus conserves the redox energy in a proton gradient. The sequence is that of NADH-quinone oxidoreductase subunit B from Campylobacter concisus (strain 13826).